The chain runs to 553 residues: NAD(P)H-quinone oxidoreductase chain 4 2 (553 aa).

Helical transmembrane passes span 6–26 (FPWLSAIILLPLLASFLIPVI), 34–54 (VRWFALGVGLADFILMCYVFL), 87–107 (ISAPLVLLAGLVTTLSILAAW), 115–135 (LFYFLMLLLYAAQIGVFVAQD), 136–156 (LLLFFLMWEIELIPVYLLVSI), 169–189 (FLLYTAAASIFILVAGLAMAL), 210–230 (ALELVLYAGLLIAFGVKLAIF), 244–264 (SAPVSMILAGVLLKMGGYGLI), 276–296 (IYFAPILAILGVVNIIYGAFA), 312–332 (VSHMGFVLLGIASFTDVGISG), 333–353 (AMLQMLSHGLIAAVLFFLAGV), 376–396 (VFALFTAGAMASLALPGMSGF), 418–438 (VVTVFLASVGLILTPIYLLSM), and 487–507 (IFIAVSFLALIVAIGFYPQLA).

Belongs to the complex I subunit 4 family.

The protein resides in the cellular thylakoid membrane. It carries out the reaction a plastoquinone + NADH + (n+1) H(+)(in) = a plastoquinol + NAD(+) + n H(+)(out). It catalyses the reaction a plastoquinone + NADPH + (n+1) H(+)(in) = a plastoquinol + NADP(+) + n H(+)(out). Functionally, NDH-1 shuttles electrons from NAD(P)H, via FMN and iron-sulfur (Fe-S) centers, to quinones in the respiratory chain. The immediate electron acceptor for the enzyme in this species is believed to be plastoquinone. Couples the redox reaction to proton translocation (for every two electrons transferred, four hydrogen ions are translocated across the cytoplasmic membrane), and thus conserves the redox energy in a proton gradient. This chain is NAD(P)H-quinone oxidoreductase chain 4 2, found in Microcystis aeruginosa (strain NIES-843 / IAM M-2473).